Reading from the N-terminus, the 191-residue chain is Large ribosomal subunit protein bL9 (191 aa).

This sequence belongs to the bacterial ribosomal protein bL9 family.

Its function is as follows. Binds to the 23S rRNA. In Granulibacter bethesdensis (strain ATCC BAA-1260 / CGDNIH1), this protein is Large ribosomal subunit protein bL9.